Here is a 385-residue protein sequence, read N- to C-terminus: Initiation-specific alpha-1,6-mannosyltransferase (385 aa).

Topologically, residues M1–K15 are cytoplasmic. Residues L16–S36 traverse the membrane as a helical; Signal-anchor for type II membrane protein segment. Residues P37–Q385 lie on the Lumenal side of the membrane. Positions D189–D191 match the DXD motif motif.

Belongs to the glycosyltransferase 32 family. It depends on Mn(2+) as a cofactor.

Its subcellular location is the endoplasmic reticulum membrane. The protein localises to the golgi apparatus membrane. It catalyses the reaction Transfers an alpha-D-mannosyl residue from GDP-mannose into lipid-linked oligosaccharide, forming an alpha-(1-&gt;6)-D-mannosyl-D-mannose linkage.. Functionally, mannosyltransferase involved in outer chain elongation of asparagine-linked oligosaccharides of the type Man(9)GlcNAc(2). Adds the first alpha-1,6-mannose to the Man(8)GlcNAc(2) and Man(9)GlcNAc(2), but not Man(5)GlcNAc(2), endoplasmic reticulum intermediates. Represents the first enzymatic event required for synthesis of outer chain mannose linkages on yeast secretory proteins. N-glycan outer chain epitopes play a crucial role in the host-fungal interaction, virulence, and host immune response such as interleukin synthesis or phagocytosis by neutrophils. The chain is Initiation-specific alpha-1,6-mannosyltransferase from Candida albicans (strain SC5314 / ATCC MYA-2876) (Yeast).